The primary structure comprises 1134 residues: RNA-binding protein NAB6 (1134 aa).

N-acetylserine is present on serine 2. Disordered stretches follow at residues 112–133, 151–173, and 464–491; these read RPVS…NTNN, RNNN…RNNS, and SVPS…SGIT. 2 stretches are compositionally biased toward low complexity: residues 115 to 133 and 151 to 164; these read SNHN…NTNN and RNNN…HNNN. Phosphoserine occurs at positions 464 and 467. A compositionally biased stretch (low complexity) spans 471–489; that stretch reads GNNNDSNNNGNNNKSNMSG. One can recognise an RRM domain in the interval 653 to 726; the sequence is RTIYIGNINP…NMLRVGWGHY (74 aa). 2 disordered regions span residues 918-959 and 1043-1092; these read LDAH…FGGL and NYRS…GSFA. The segment covering 1057-1081 has biased composition (polar residues); that stretch reads STLSYNHSKNNETPMQDIFTNGETA. Basic residues predominate over residues 1083-1092; the sequence is NRKKKRGSFA.

The protein resides in the cytoplasm. RNA-binding protein that associates with mRNAs encoding cell wall proteins. In Saccharomyces cerevisiae (strain ATCC 204508 / S288c) (Baker's yeast), this protein is RNA-binding protein NAB6 (NAB6).